Here is a 712-residue protein sequence, read N- to C-terminus: Golgin candidate 3 (712 aa).

The tract at residues 23–49 (DEEEDDLHKYGSANGVSNSDRRNSSGF) is disordered. A compositionally biased stretch (polar residues) spans 36–49 (NGVSNSDRRNSSGF). Positions 65-134 (AHHEIERYKA…LKEARTDISR (70 aa)) form a coiled coil. Polar residues predominate over residues 135–150 (GSNNYAIKGNNDQSPN). Disordered regions lie at residues 135 to 176 (GSNN…TDSF) and 306 to 347 (ESRK…MEQS). Coiled coils occupy residues 197–313 (QATE…LTNS), 340–558 (GKEE…LNRM), and 659–690 (LKDA…QEAA). Residues 328–344 (STLDKEKPESFPGKEEM) are compositionally biased toward basic and acidic residues. Positions 557–608 (RMSMESDYLVDRRIVIKLLVTYFQKNHNKEVLDLMVRMLGFSEEDKERIGAA) constitute a GRIP domain. The tract at residues 666–712 (ERREAEEAAASKAKQDSERTRQEAALHDSEFSTVPLRSSESNQRLSR) is disordered. Residues 678-695 (AKQDSERTRQEAALHDSE) are compositionally biased toward basic and acidic residues. Polar residues predominate over residues 696-712 (FSTVPLRSSESNQRLSR).

Interacts with ARF1; preferentially with the active form of the protein.

It is found in the golgi apparatus. The protein localises to the endosome. Its function is as follows. Golgi matrix protein playing a role in tethering of vesicles to Golgi membranes and in maintaining the overall structure of the Golgi apparatus. The polypeptide is Golgin candidate 3 (GC3) (Arabidopsis thaliana (Mouse-ear cress)).